We begin with the raw amino-acid sequence, 201 residues long: Recombination protein RecR (201 aa).

Residues 57–72 (CADCRTFTEQEHCTIC) form a C4-type zinc finger. The Toprim domain occupies 81–176 (GQICVVESPA…LASRIAHGVP (96 aa)).

Belongs to the RecR family.

May play a role in DNA repair. It seems to be involved in an RecBC-independent recombinational process of DNA repair. It may act with RecF and RecO. This Yersinia enterocolitica serotype O:8 / biotype 1B (strain NCTC 13174 / 8081) protein is Recombination protein RecR.